The following is a 472-amino-acid chain: 3-isopropylmalate dehydratase large subunit (472 aa).

[4Fe-4S] cluster contacts are provided by Cys353, Cys414, and Cys417.

Belongs to the aconitase/IPM isomerase family. LeuC type 1 subfamily. In terms of assembly, heterodimer of LeuC and LeuD. The cofactor is [4Fe-4S] cluster.

The catalysed reaction is (2R,3S)-3-isopropylmalate = (2S)-2-isopropylmalate. It functions in the pathway amino-acid biosynthesis; L-leucine biosynthesis; L-leucine from 3-methyl-2-oxobutanoate: step 2/4. Its function is as follows. Catalyzes the isomerization between 2-isopropylmalate and 3-isopropylmalate, via the formation of 2-isopropylmaleate. The protein is 3-isopropylmalate dehydratase large subunit of Acinetobacter baumannii (strain ACICU).